Reading from the N-terminus, the 1709-residue chain is Acrosomal protein KIAA1210 (1709 aa).

Disordered stretches follow at residues 207–226, 239–275, 451–663, 763–973, 1211–1382, 1408–1516, 1539–1571, and 1589–1653; these read PVRE…GSKA, PERS…SKVP, PNLD…AEKT, PPRS…MAVE, LKRG…SVNA, TKKF…GRGH, ADKQ…QSDY, and FKAH…KSVG. Over residues 257–272 the composition is skewed to basic residues; the sequence is PQQRSHISRTLPKPRS. Residues 473-490 show a composition bias toward basic and acidic residues; sequence EEEKSITKPKEINEKKLG. Polar residues-rich tracts occupy residues 494 to 505 and 514 to 527; these read ADSSSQKQNNKT and DQAP…SQGY. A compositionally biased stretch (low complexity) spans 595–608; the sequence is EQPTTSQPETTTPQ. Residues 651-663 are compositionally biased toward basic and acidic residues; the sequence is PYHEDAASGAEKT. Residues 777-794 are compositionally biased toward acidic residues; sequence EEVSSDSENIPEEGDGSE. 5 stretches are compositionally biased toward polar residues: residues 886–941, 1288–1299, 1332–1350, 1366–1376, and 1457–1469; these read KNQQ…QSDS, FKEQLSPRQLSQ, HSSQ…SSKG, PSSSPFQQQVH, and DGNN…LSNQ. Residues 1502–1513 are compositionally biased toward low complexity; that stretch reads SVPSGPISSSVG. The segment covering 1542 to 1552 has biased composition (basic and acidic residues); that stretch reads QQSRPKSESMA.

As to quaternary structure, interacts with TOP2B.

It is found in the cytoplasmic vesicle. It localises to the secretory vesicle. The protein resides in the acrosome. In Homo sapiens (Human), this protein is Acrosomal protein KIAA1210.